A 2556-amino-acid chain; its full sequence is Ubiquitin carboxyl-terminal hydrolase 9Y (2556 aa).

Residues 1 to 33 (MTITTRGSPVGENESQGQTSDGQPQPSFQQNQI) show a composition bias toward polar residues. Positions 1 to 68 (MTITTRGSPV…QHEEEDPSFP (68 aa)) are disordered. Over residues 34-44 (SSSDSSNETSP) the composition is skewed to low complexity. At Ser587 the chain carries Phosphoserine. At Thr589 the chain carries Phosphothreonine. A disordered region spans residues 971-999 (NMPSSPDSSSDSSAGPPGNHSHNNYRDVS). The segment covering 973-983 (PSSPDSSSDSS) has biased composition (low complexity). Positions 1559–1958 (VGLKNAGATC…NAYILFYERM (400 aa)) constitute a USP domain. Catalysis depends on Cys1568, which acts as the Nucleophile. Residues Cys1729, His1731, Cys1773, and Cys1776 each coordinate Zn(2+). His1881 acts as the Proton acceptor in catalysis. Phosphoserine is present on Ser2447. The interval 2513 to 2556 (QNYVPEQPFSGPASHHLNNPQKNDKPQETHESNEEISSCLIKDQ) is disordered. The span at 2534–2545 (KNDKPQETHESN) shows a compositional bias: basic and acidic residues. Phosphoserine is present on Ser2549.

This sequence belongs to the peptidase C19 family.

The catalysed reaction is Thiol-dependent hydrolysis of ester, thioester, amide, peptide and isopeptide bonds formed by the C-terminal Gly of ubiquitin (a 76-residue protein attached to proteins as an intracellular targeting signal).. It functions in the pathway protein modification; protein ubiquitination. Functionally, deubiquitinase that mediates deubiquitination of target proteins. May stabilize target proteins that are important for male germ cell development. The polypeptide is Ubiquitin carboxyl-terminal hydrolase 9Y (Mus musculus (Mouse)).